The following is a 72-amino-acid chain: Galensin (72 aa).

A signal peptide spans 1-22 (MLTLKKSMLLLFFLGLVSVSLA). The propeptide occupies 23-48 (DDKREDEAEEGEDKRAAEEERNVEKR). F71 is subject to Phenylalanine amide.

It belongs to the frog skin active peptide (FSAP) family. Brevinin subfamily. Homodimer; disulfide-linked. As to expression, expressed by the skin glands.

The protein resides in the secreted. Antibacterial activity against the Gram-positive bacterium M.luteus and the Gram-negative bacterium E.coli. The sequence is that of Galensin from Kassina senegalensis (Senegal running frog).